The sequence spans 146 residues: Putative pre-16S rRNA nuclease (146 aa).

This sequence belongs to the YqgF nuclease family.

It localises to the cytoplasm. Functionally, could be a nuclease involved in processing of the 5'-end of pre-16S rRNA. The sequence is that of Putative pre-16S rRNA nuclease from Pediococcus pentosaceus (strain ATCC 25745 / CCUG 21536 / LMG 10740 / 183-1w).